A 182-amino-acid polypeptide reads, in one-letter code: UPF0398 protein lwe1908 (182 aa).

The protein belongs to the UPF0398 family.

In Listeria welshimeri serovar 6b (strain ATCC 35897 / DSM 20650 / CCUG 15529 / CIP 8149 / NCTC 11857 / SLCC 5334 / V8), this protein is UPF0398 protein lwe1908.